Here is a 458-residue protein sequence, read N- to C-terminus: Argininosuccinate lyase (458 aa).

This sequence belongs to the lyase 1 family. Argininosuccinate lyase subfamily.

The protein localises to the cytoplasm. It catalyses the reaction 2-(N(omega)-L-arginino)succinate = fumarate + L-arginine. It functions in the pathway amino-acid biosynthesis; L-arginine biosynthesis; L-arginine from L-ornithine and carbamoyl phosphate: step 3/3. The polypeptide is Argininosuccinate lyase (Buchnera aphidicola subsp. Baizongia pistaciae (strain Bp)).